The primary structure comprises 251 residues: uncharacterized protein (251 aa).

14 to 37 provides a ligand contact to NADP(+); that stretch reads VLGGTSAIGLATARRLIARGARLV. Serine 145 contributes to the substrate binding site. The active-site Proton acceptor is tyrosine 158.

Belongs to the short-chain dehydrogenases/reductases (SDR) family.

In terms of biological role, may be involved in the biosynthesis of a heptaene-type antibiotic. This is an uncharacterized protein from Streptomyces coelicolor.